The primary structure comprises 480 residues: Transposase for transposon Tn552 (480 aa).

A DNA-binding region (H-T-H motif) is located at residues 36 to 55 (LSSISKSKGIALSTLYRWNK). An Integrase catalytic domain is found at 155–341 (ESSRPNEIWQ…TPINRWNSNH (187 aa)). Positions 438–480 (RKHLKQNIASPSTTDLIKEEKSYGYSPQETTKNVKKLKRYRND) are disordered. The segment covering 470–480 (NVKKLKRYRND) has biased composition (basic residues).

The chain is Transposase for transposon Tn552 from Staphylococcus aureus.